A 79-amino-acid chain; its full sequence is Acyl carrier protein (79 aa).

The Carrier domain occupies 2–77 (SSIEERVKKI…QAVDYINKHL (76 aa)). S37 is modified (O-(pantetheine 4'-phosphoryl)serine).

This sequence belongs to the acyl carrier protein (ACP) family. In terms of processing, 4'-phosphopantetheine is transferred from CoA to a specific serine of apo-ACP by AcpS. This modification is essential for activity because fatty acids are bound in thioester linkage to the sulfhydryl of the prosthetic group.

Its subcellular location is the cytoplasm. It participates in lipid metabolism; fatty acid biosynthesis. Carrier of the growing fatty acid chain in fatty acid biosynthesis. This chain is Acyl carrier protein, found in Alkalilimnicola ehrlichii (strain ATCC BAA-1101 / DSM 17681 / MLHE-1).